The primary structure comprises 272 residues: Phosphate import ATP-binding protein PstB 2 (272 aa).

Positions 26-267 constitute an ABC transporter domain; that stretch reads IEINNLCLNY…PIHKQTEDYI (242 aa). 58 to 65 provides a ligand contact to ATP; it reads GPSGCGKS.

This sequence belongs to the ABC transporter superfamily. Phosphate importer (TC 3.A.1.7) family. As to quaternary structure, the complex is composed of two ATP-binding proteins (PstB), two transmembrane proteins (PstC and PstA) and a solute-binding protein (PstS).

It localises to the cell inner membrane. The catalysed reaction is phosphate(out) + ATP + H2O = ADP + 2 phosphate(in) + H(+). Functionally, part of the ABC transporter complex PstSACB involved in phosphate import. Responsible for energy coupling to the transport system. This is Phosphate import ATP-binding protein PstB 2 from Aliivibrio fischeri (strain ATCC 700601 / ES114) (Vibrio fischeri).